We begin with the raw amino-acid sequence, 405 residues long: Arginine biosynthesis bifunctional protein ArgJ, mitochondrial (405 aa).

Positions 174, 200, 211, and 300 each coordinate substrate. T211 (nucleophile) is an active-site residue.

It belongs to the ArgJ family. In terms of assembly, heterodimer of an alpha and a beta chain. The alpha and beta chains are autoproteolytically processed from a single precursor protein within the mitochondrion.

Its subcellular location is the mitochondrion matrix. It carries out the reaction N(2)-acetyl-L-ornithine + L-glutamate = N-acetyl-L-glutamate + L-ornithine. The enzyme catalyses L-glutamate + acetyl-CoA = N-acetyl-L-glutamate + CoA + H(+). Its pathway is amino-acid biosynthesis; L-arginine biosynthesis; L-ornithine and N-acetyl-L-glutamate from L-glutamate and N(2)-acetyl-L-ornithine (cyclic): step 1/1. The protein operates within amino-acid biosynthesis; L-arginine biosynthesis; N(2)-acetyl-L-ornithine from L-glutamate: step 1/4. Functionally, catalyzes two activities which are involved in the cyclic version of arginine biosynthesis: the synthesis of acetylglutamate from glutamate and acetyl-CoA, and of ornithine by transacetylation between acetylornithine and glutamate. The chain is Arginine biosynthesis bifunctional protein ArgJ, mitochondrial from Candida tropicalis (strain ATCC MYA-3404 / T1) (Yeast).